The chain runs to 107 residues: Prepilin peptidase-dependent protein C (107 aa).

A propeptide spanning residues 1 to 10 (MSASLKNQQG) is cleaved from the precursor. Phenylalanine 11 is modified (N-methylphenylalanine). Residues 11–30 (FSLPEVMLAMVLMVMIVTAL) traverse the membrane as a helical segment.

It localises to the membrane. Not yet known. This is Prepilin peptidase-dependent protein C (ppdC) from Escherichia coli (strain K12).